Consider the following 342-residue polypeptide: Anthranilate phosphoribosyltransferase (342 aa).

5-phospho-alpha-D-ribose 1-diphosphate contacts are provided by residues Gly-79, 82 to 83 (GD), Thr-87, 89 to 92 (NIST), 107 to 115 (KHCNQRISS), and Ser-119. Position 79 (Gly-79) interacts with anthranilate. Ser-91 contacts Mg(2+). Position 110 (Asn-110) interacts with anthranilate. Arg-165 lines the anthranilate pocket. Mg(2+) contacts are provided by Asp-223 and Glu-224.

The protein belongs to the anthranilate phosphoribosyltransferase family. As to quaternary structure, homodimer. Requires Mg(2+) as cofactor.

The enzyme catalyses N-(5-phospho-beta-D-ribosyl)anthranilate + diphosphate = 5-phospho-alpha-D-ribose 1-diphosphate + anthranilate. Its pathway is amino-acid biosynthesis; L-tryptophan biosynthesis; L-tryptophan from chorismate: step 2/5. Functionally, catalyzes the transfer of the phosphoribosyl group of 5-phosphorylribose-1-pyrophosphate (PRPP) to anthranilate to yield N-(5'-phosphoribosyl)-anthranilate (PRA). The protein is Anthranilate phosphoribosyltransferase of Buchnera aphidicola subsp. Acyrthosiphon pisum (strain Tuc7).